The sequence spans 175 residues: ATP-dependent protease subunit HslV (175 aa).

T2 is an active-site residue. Na(+) contacts are provided by A156, C159, and T162.

It belongs to the peptidase T1B family. HslV subfamily. In terms of assembly, a double ring-shaped homohexamer of HslV is capped on each side by a ring-shaped HslU homohexamer. The assembly of the HslU/HslV complex is dependent on binding of ATP.

The protein localises to the cytoplasm. The enzyme catalyses ATP-dependent cleavage of peptide bonds with broad specificity.. Allosterically activated by HslU binding. Protease subunit of a proteasome-like degradation complex believed to be a general protein degrading machinery. This is ATP-dependent protease subunit HslV from Rhizobium rhizogenes (strain K84 / ATCC BAA-868) (Agrobacterium radiobacter).